We begin with the raw amino-acid sequence, 330 residues long: tRNA U34 carboxymethyltransferase (330 aa).

Carboxy-S-adenosyl-L-methionine contacts are provided by residues Lys-91, Trp-105, Lys-110, Gly-130, 152–154, 181–182, Met-196, Tyr-200, and Arg-315; these read DPS and IE.

It belongs to the class I-like SAM-binding methyltransferase superfamily. CmoB family. In terms of assembly, homotetramer.

The catalysed reaction is carboxy-S-adenosyl-L-methionine + 5-hydroxyuridine(34) in tRNA = 5-carboxymethoxyuridine(34) in tRNA + S-adenosyl-L-homocysteine + H(+). Its function is as follows. Catalyzes carboxymethyl transfer from carboxy-S-adenosyl-L-methionine (Cx-SAM) to 5-hydroxyuridine (ho5U) to form 5-carboxymethoxyuridine (cmo5U) at position 34 in tRNAs. The protein is tRNA U34 carboxymethyltransferase of Shewanella halifaxensis (strain HAW-EB4).